A 196-amino-acid polypeptide reads, in one-letter code: Charged multivesicular body protein 1a (196 aa).

Met1 is modified (N-acetylmethionine). Positions 5 to 47 (LFQLKFTAKQLEKLAKKAEKDSKAEQAKVKKALLQKNVECARV) form a coiled coil. Ser101 carries the phosphoserine modification. Residues 102-124 (TMDLQKVSSVMDRFEQQVQNLDV) adopt a coiled-coil conformation. The residue at position 173 (Ser173) is a Phosphoserine. The disordered stretch occupies residues 173-196 (SAVGESSVRSQEDQLSRRLAALRN). Residues 185–195 (DQLSRRLAALR) carry the MIT-interacting motif motif.

It belongs to the SNF7 family. Probable peripherally associated component of the endosomal sorting required for transport complex III (ESCRT-III). ESCRT-III components are thought to multimerize to form a flat lattice on the perimeter membrane of the endosome. Several assembly forms of ESCRT-III may exist that interact and act sequentially. Self-associates. Interacts with CHMP1B. Interacts with VPS4A. Interacts with VPS4B. Interacts with PHF1. Interacts with IST1. Interacts with MITD1. Expressed in placenta, cultured skin fibroblasts and in osteoblast cell line MG-63.

The protein resides in the cytoplasm. Its subcellular location is the endosome membrane. It is found in the nucleus matrix. Functionally, probable peripherally associated component of the endosomal sorting required for transport complex III (ESCRT-III) which is involved in multivesicular bodies (MVBs) formation and sorting of endosomal cargo proteins into MVBs. MVBs contain intraluminal vesicles (ILVs) that are generated by invagination and scission from the limiting membrane of the endosome and mostly are delivered to lysosomes enabling degradation of membrane proteins, such as stimulated growth factor receptors, lysosomal enzymes and lipids. The MVB pathway appears to require the sequential function of ESCRT-O, -I,-II and -III complexes. ESCRT-III proteins mostly dissociate from the invaginating membrane before the ILV is released. The ESCRT machinery also functions in topologically equivalent membrane fission events, such as the terminal stages of cytokinesis and the budding of enveloped viruses (HIV-1 and other lentiviruses). ESCRT-III proteins are believed to mediate the necessary vesicle extrusion and/or membrane fission activities, possibly in conjunction with the AAA ATPase VPS4. Involved in cytokinesis. Involved in recruiting VPS4A and/or VPS4B to the midbody of dividing cells. May also be involved in chromosome condensation. Targets the Polycomb group (PcG) protein BMI1/PCGF4 to regions of condensed chromatin. May play a role in stable cell cycle progression and in PcG gene silencing. In Homo sapiens (Human), this protein is Charged multivesicular body protein 1a (CHMP1A).